We begin with the raw amino-acid sequence, 258 residues long: Triosephosphate isomerase (258 aa).

A substrate-binding site is contributed by 9–11; it reads NWK. Histidine 105 functions as the Electrophile in the catalytic mechanism. The active-site Proton acceptor is the glutamate 176. Glycine 182 and serine 214 together coordinate substrate.

The protein belongs to the triosephosphate isomerase family. As to quaternary structure, homodimer.

The protein resides in the cytoplasm. The catalysed reaction is D-glyceraldehyde 3-phosphate = dihydroxyacetone phosphate. Its pathway is carbohydrate biosynthesis; gluconeogenesis. The protein operates within carbohydrate degradation; glycolysis; D-glyceraldehyde 3-phosphate from glycerone phosphate: step 1/1. Its function is as follows. Involved in the gluconeogenesis. Catalyzes stereospecifically the conversion of dihydroxyacetone phosphate (DHAP) to D-glyceraldehyde-3-phosphate (G3P). In Mycoplasmopsis agalactiae (strain NCTC 10123 / CIP 59.7 / PG2) (Mycoplasma agalactiae), this protein is Triosephosphate isomerase.